We begin with the raw amino-acid sequence, 382 residues long: Mannitol-1-phosphate 5-dehydrogenase (382 aa).

3–14 (ALHFGAGNIGRG) contacts NAD(+).

This sequence belongs to the mannitol dehydrogenase family.

It carries out the reaction D-mannitol 1-phosphate + NAD(+) = beta-D-fructose 6-phosphate + NADH + H(+). The sequence is that of Mannitol-1-phosphate 5-dehydrogenase (mtlD) from Klebsiella pneumoniae.